The primary structure comprises 460 residues: MHQIYSATSTDKKLPEVVDLFSGCGGLALGFQLAGFNIRKGIELDRDASDVASFNLHWRQGKHDRHLNNDITLLSANEFYNDLDRKNDLIVIGGPPCQAYSKIGRAKLKSLGEERRQENDARGKLYENFLDYALHVDANVIVMENVPEAVNYGGVNIPDTVCDILINKGYDAIWTVLNAADFGVPQTRVRLFVMAIKKDIGKIKFIPEPTHKPHINVKRQSVNVRWMQSEIRNSKYYKQPNIPDETLSDWVTVGDAIGDLPNLFPVYNQKYKNYKPMMMKEYKSPPQNTFQKLMRINNKVDKVTGNMFRNTKRDFSIFDKMEEGDNYLDAHNIAMSLLRKEMRKSGITKENEFEYRLLKDRIVPPYSTEKFVEKWRKLSSDKPSHTLVAHLSTDTYSHLHPREPRGISVREAARLQSFPDDFLFDCSMGAAFKQIGNAVPPLLAKAIAEAMKKNIQGGCI.

The 444-residue stretch at 15–458 folds into the SAM-dependent MTase C5-type domain; that stretch reads PEVVDLFSGC…EAMKKNIQGG (444 aa). Residue Cys-97 is part of the active site.

This sequence belongs to the class I-like SAM-binding methyltransferase superfamily. C5-methyltransferase family.

It catalyses the reaction a 2'-deoxycytidine in DNA + S-adenosyl-L-methionine = a 5-methyl-2'-deoxycytidine in DNA + S-adenosyl-L-homocysteine + H(+). Its function is as follows. A methylase, recognizes the double-stranded sequence 5'-ACCGGT-3', methylates C-? on both strands. No endonuclease has been identified for this methylase. The protein is Putative type II methyltransferase M.OihORF3336P of Oceanobacillus iheyensis (strain DSM 14371 / CIP 107618 / JCM 11309 / KCTC 3954 / HTE831).